A 214-amino-acid polypeptide reads, in one-letter code: Probable transaldolase (214 aa).

Lysine 83 functions as the Schiff-base intermediate with substrate in the catalytic mechanism.

The protein belongs to the transaldolase family. Type 3B subfamily.

Its subcellular location is the cytoplasm. It carries out the reaction D-sedoheptulose 7-phosphate + D-glyceraldehyde 3-phosphate = D-erythrose 4-phosphate + beta-D-fructose 6-phosphate. Its pathway is carbohydrate degradation; pentose phosphate pathway; D-glyceraldehyde 3-phosphate and beta-D-fructose 6-phosphate from D-ribose 5-phosphate and D-xylulose 5-phosphate (non-oxidative stage): step 2/3. Transaldolase is important for the balance of metabolites in the pentose-phosphate pathway. The protein is Probable transaldolase of Citrifermentans bemidjiense (strain ATCC BAA-1014 / DSM 16622 / JCM 12645 / Bem) (Geobacter bemidjiensis).